A 1051-amino-acid chain; its full sequence is Helicase POLQ-like (1051 aa).

Residues 1–10 (MANKHNLCKK) are compositionally biased toward basic residues. Disordered regions lie at residues 1–28 (MANKHNLCKKRSLDLSEESTSESHAKRQ) and 61–112 (LFGT…APTD). 2 stretches are compositionally biased toward polar residues: residues 64-78 (TQATTSTNKMTQSGS) and 89-102 (SFPSAQSVPPNSAS). A compositionally biased stretch (basic and acidic residues) spans 103-112 (KPDEASAPTD). Residues 274-446 (LPAIRQRKNL…FLNADVYTRG (173 aa)) form the Helicase ATP-binding domain. Residue 287–294 (LPTSGGKT) participates in ATP binding. Residues 391–394 (DELH) carry the DEAH box motif. In terms of domain architecture, Helicase C-terminal spans 497–689 (HLAGLISECA…NEAVGLQSLI (193 aa)).

The protein belongs to the helicase family. SKI2 subfamily.

The protein resides in the nucleus. It localises to the chromosome. It carries out the reaction Couples ATP hydrolysis with the unwinding of duplex DNA by translocating in the 3'-5' direction.. The catalysed reaction is ATP + H2O = ADP + phosphate + H(+). Single-stranded 3'-5' DNA helicase that plays a key role in homology-driven double-strand break (DSB) repair. Involved in different DSB repair mechanisms that are guided by annealing of extensive stretches of complementary bases at break ends, such as microhomology-mediated end-joining (MMEJ), single-strand annealing (SSA) or synthesis-dependent strand annealing (SDSA). In Drosophila melanogaster (Fruit fly), this protein is Helicase POLQ-like.